A 555-amino-acid chain; its full sequence is uncharacterized protein (555 aa).

At 1-83 (MSNEDETTRL…GRRKLLCLYG (83 aa)) the chain is on the extracellular side. A helical transmembrane segment spans residues 84–104 (LVMIICIAESISMTATIPLVM). Topologically, residues 105–125 (DKVAEGISDENGHYDSVAVQT) are cytoplasmic. The chain crosses the membrane as a helical span at residues 126–146 (IVSSISSSTMMIAGAISIFMA). The Extracellular portion of the chain corresponds to 147–188 (GKWGELSDRIGRVRVFKYMSGIRVIGLLTHVFTLSSKMKYHK). A helical transmembrane segment spans residues 189 to 209 (WAIVLTACIVPSFGGLFALVA). Residues 210 to 229 (NGNSYVSDIVKTEHRMVTIG) are Cytoplasmic-facing. A helical transmembrane segment spans residues 230–250 (IMMSCIYATMGVGPMFGSFLV). The Extracellular segment spans residues 251–257 (KWTHGNG). A helical transmembrane segment spans residues 258-278 (FIPIYTSIAFVILALIICETI). At 279-356 (MVEPRHETQM…LVPRHTVILL (78 aa)) the chain is on the cytoplasmic side. The segment at 289–311 (AHSQSTYTKRREKLRSQSGSDDA) is disordered. Residues 357-377 (IVLDILFVCGTTSCMPALILF) form a helical membrane-spanning segment. The Extracellular portion of the chain corresponds to 378–386 (STYEYKWHA). The chain crosses the membrane as a helical span at residues 387-407 (VELGYFISILGIGRGVVLLVV). At 408-428 (SPTLLYTLKRIYQHLNHSIDK) the chain is on the cytoplasmic side. A helical transmembrane segment spans residues 429 to 449 (IDIFCIQFSMIVITLSLFVMI). Over 450–459 (RFGEKTPTSM) the chain is Extracellular. Residues 460–480 (IIFALLQALSAFCSPTLQSGI) form a helical membrane-spanning segment. Residues 481–491 (IKYTSKKHTGE) are Cytoplasmic-facing. Residues 492-512 (MFGAMALVRSCVMLVIPPILL) form a helical membrane-spanning segment. Residues 513–523 (KLYGSTVSVNP) are Extracellular-facing. The chain crosses the membrane as a helical span at residues 524-544 (SLFMYIPFSTSIVAILLTFFL). At 545 to 555 (RIYKNPPLDGP) the chain is on the cytoplasmic side.

The protein resides in the membrane. This is an uncharacterized protein from Saccharomyces cerevisiae (strain ATCC 204508 / S288c) (Baker's yeast).